Here is a 420-residue protein sequence, read N- to C-terminus: Gamma-glutamyl phosphate reductase (420 aa).

The protein belongs to the gamma-glutamyl phosphate reductase family.

The protein resides in the cytoplasm. It carries out the reaction L-glutamate 5-semialdehyde + phosphate + NADP(+) = L-glutamyl 5-phosphate + NADPH + H(+). Its pathway is amino-acid biosynthesis; L-proline biosynthesis; L-glutamate 5-semialdehyde from L-glutamate: step 2/2. Its function is as follows. Catalyzes the NADPH-dependent reduction of L-glutamate 5-phosphate into L-glutamate 5-semialdehyde and phosphate. The product spontaneously undergoes cyclization to form 1-pyrroline-5-carboxylate. The chain is Gamma-glutamyl phosphate reductase from Neisseria gonorrhoeae (strain ATCC 700825 / FA 1090).